A 296-amino-acid chain; its full sequence is Ribosomal RNA small subunit methyltransferase A (296 aa).

Residues asparagine 40, valine 42, glycine 67, glutamate 88, aspartate 118, and asparagine 137 each coordinate S-adenosyl-L-methionine.

This sequence belongs to the class I-like SAM-binding methyltransferase superfamily. rRNA adenine N(6)-methyltransferase family. RsmA subfamily.

The protein resides in the cytoplasm. It catalyses the reaction adenosine(1518)/adenosine(1519) in 16S rRNA + 4 S-adenosyl-L-methionine = N(6)-dimethyladenosine(1518)/N(6)-dimethyladenosine(1519) in 16S rRNA + 4 S-adenosyl-L-homocysteine + 4 H(+). Functionally, specifically dimethylates two adjacent adenosines (A1518 and A1519) in the loop of a conserved hairpin near the 3'-end of 16S rRNA in the 30S particle. May play a critical role in biogenesis of 30S subunits. This Rhodococcus opacus (strain B4) protein is Ribosomal RNA small subunit methyltransferase A.